The sequence spans 195 residues: MPKLGMQSIRRRQLIDATLEAINEVGMHDATIAQIARRAGVSTGIISHYFRDKNGLLEATMRDITSQLRDAVLNRLHALPQGSAEQRLQAIVGGNFDETQVSSAAMKAWLAFWASSMHQPMLYRLQQVSSRRLLSNLVSEFRRELPREQAQEAGYGLAALIDGLWLRAALSGKPLDKTRANSLTRHFITQHLPTD.

Residues 8 to 68 (SIRRRQLIDA…ATMRDITSQL (61 aa)) enclose the HTH tetR-type domain. Positions 31–50 (TIAQIARRAGVSTGIISHYF) form a DNA-binding region, H-T-H motif.

It functions in the pathway amine and polyamine biosynthesis; betaine biosynthesis via choline pathway [regulation]. In terms of biological role, repressor involved in the biosynthesis of the osmoprotectant glycine betaine. It represses transcription of the choline transporter BetT and the genes of BetAB involved in the synthesis of glycine betaine. The protein is HTH-type transcriptional regulator BetI of Escherichia coli (strain K12 / DH10B).